Reading from the N-terminus, the 96-residue chain is MAIRPLHDRVIIKREEVETLSAGGIVLTGSAATKSTRAKVLAVGKGRVLENGTVQPLDVKVGDTVIFNDGYGVKAEKIDGEEVLIISENDILAIVE.

Belongs to the GroES chaperonin family. Heptamer of 7 subunits arranged in a ring. Interacts with the chaperonin GroEL.

It localises to the cytoplasm. Functionally, together with the chaperonin GroEL, plays an essential role in assisting protein folding. The GroEL-GroES system forms a nano-cage that allows encapsulation of the non-native substrate proteins and provides a physical environment optimized to promote and accelerate protein folding. GroES binds to the apical surface of the GroEL ring, thereby capping the opening of the GroEL channel. The chain is Co-chaperonin GroES from Actinobacillus succinogenes (strain ATCC 55618 / DSM 22257 / CCUG 43843 / 130Z).